Here is a 402-residue protein sequence, read N- to C-terminus: Type II NADH:quinone oxidoreductase (402 aa).

FAD contacts are provided by residues 12–16 (GAGYA), 39–40 (NK), and Val-83. Glu-172 is an active-site residue. Residues Asp-302, 319 to 320 (AQ), and Lys-379 each bind FAD.

The protein belongs to the NADH dehydrogenase family. Requires FAD as cofactor.

It is found in the cell membrane. It catalyses the reaction a quinone + NADH + H(+) = a quinol + NAD(+). Its function is as follows. Alternative, nonproton pumping NADH:quinone oxidoreductase that delivers electrons to the respiratory chain by oxidation of NADH and reduction of quinones, and contributes to the regeneration of NAD(+). This chain is Type II NADH:quinone oxidoreductase, found in Staphylococcus saprophyticus subsp. saprophyticus (strain ATCC 15305 / DSM 20229 / NCIMB 8711 / NCTC 7292 / S-41).